A 331-amino-acid chain; its full sequence is 6-phosphogluconolactonase (331 aa).

It belongs to the cycloisomerase 2 family.

It carries out the reaction 6-phospho-D-glucono-1,5-lactone + H2O = 6-phospho-D-gluconate + H(+). The protein operates within carbohydrate degradation; pentose phosphate pathway; D-ribulose 5-phosphate from D-glucose 6-phosphate (oxidative stage): step 2/3. Catalyzes the hydrolysis of 6-phosphogluconolactone to 6-phosphogluconate. This chain is 6-phosphogluconolactonase, found in Salmonella typhi.